Consider the following 372-residue polypeptide: Queuine tRNA-ribosyltransferase (372 aa).

D92 (proton acceptor) is an active-site residue. Residues D92 to F96, D146, Q188, and G215 each bind substrate. The interval G246–E252 is RNA binding. D265 acts as the Nucleophile in catalysis. The interval T270 to R274 is RNA binding; important for wobble base 34 recognition. Zn(2+)-binding residues include C303, C305, C308, and H334.

The protein belongs to the queuine tRNA-ribosyltransferase family. As to quaternary structure, homodimer. Within each dimer, one monomer is responsible for RNA recognition and catalysis, while the other monomer binds to the replacement base PreQ1. The cofactor is Zn(2+).

The catalysed reaction is 7-aminomethyl-7-carbaguanine + guanosine(34) in tRNA = 7-aminomethyl-7-carbaguanosine(34) in tRNA + guanine. It functions in the pathway tRNA modification; tRNA-queuosine biosynthesis. Catalyzes the base-exchange of a guanine (G) residue with the queuine precursor 7-aminomethyl-7-deazaguanine (PreQ1) at position 34 (anticodon wobble position) in tRNAs with GU(N) anticodons (tRNA-Asp, -Asn, -His and -Tyr). Catalysis occurs through a double-displacement mechanism. The nucleophile active site attacks the C1' of nucleotide 34 to detach the guanine base from the RNA, forming a covalent enzyme-RNA intermediate. The proton acceptor active site deprotonates the incoming PreQ1, allowing a nucleophilic attack on the C1' of the ribose to form the product. After dissociation, two additional enzymatic reactions on the tRNA convert PreQ1 to queuine (Q), resulting in the hypermodified nucleoside queuosine (7-(((4,5-cis-dihydroxy-2-cyclopenten-1-yl)amino)methyl)-7-deazaguanosine). The sequence is that of Queuine tRNA-ribosyltransferase from Synechococcus sp. (strain CC9605).